The primary structure comprises 389 residues: Lipid-A-disaccharide synthase (389 aa).

Belongs to the LpxB family.

It carries out the reaction a lipid X + a UDP-2-N,3-O-bis[(3R)-3-hydroxyacyl]-alpha-D-glucosamine = a lipid A disaccharide + UDP + H(+). It functions in the pathway bacterial outer membrane biogenesis; LPS lipid A biosynthesis. Functionally, condensation of UDP-2,3-diacylglucosamine and 2,3-diacylglucosamine-1-phosphate to form lipid A disaccharide, a precursor of lipid A, a phosphorylated glycolipid that anchors the lipopolysaccharide to the outer membrane of the cell. In Burkholderia vietnamiensis (strain G4 / LMG 22486) (Burkholderia cepacia (strain R1808)), this protein is Lipid-A-disaccharide synthase.